The chain runs to 194 residues: Translationally-controlled tumor protein homolog 2 (194 aa).

In terms of domain architecture, TCTP spans methionine 1 to valine 194.

The protein belongs to the TCTP family.

The protein localises to the cytoplasm. Its function is as follows. Involved in calcium binding and microtubule stabilization. The sequence is that of Translationally-controlled tumor protein homolog 2 from Dictyostelium discoideum (Social amoeba).